Reading from the N-terminus, the 257-residue chain is UPF0246 protein Rpic_2164 (257 aa).

The protein belongs to the UPF0246 family.

The polypeptide is UPF0246 protein Rpic_2164 (Ralstonia pickettii (strain 12J)).